A 321-amino-acid chain; its full sequence is Anthranilate phosphoribosyltransferase (321 aa).

Residues Gly-72, 75–76 (GD), Thr-80, 82–85 (NVST), 99–107 (KHGNVSITS), and Ser-111 each bind 5-phospho-alpha-D-ribose 1-diphosphate. Position 72 (Gly-72) interacts with anthranilate. Ser-84 contacts Mg(2+). Anthranilate is bound at residue Asn-102. Arg-157 lines the anthranilate pocket. 2 residues coordinate Mg(2+): Asp-216 and Glu-217.

Belongs to the anthranilate phosphoribosyltransferase family. In terms of assembly, homodimer. Requires Mg(2+) as cofactor.

The enzyme catalyses N-(5-phospho-beta-D-ribosyl)anthranilate + diphosphate = 5-phospho-alpha-D-ribose 1-diphosphate + anthranilate. The protein operates within amino-acid biosynthesis; L-tryptophan biosynthesis; L-tryptophan from chorismate: step 2/5. Catalyzes the transfer of the phosphoribosyl group of 5-phosphorylribose-1-pyrophosphate (PRPP) to anthranilate to yield N-(5'-phosphoribosyl)-anthranilate (PRA). The sequence is that of Anthranilate phosphoribosyltransferase from Methanococcus maripaludis (strain DSM 14266 / JCM 13030 / NBRC 101832 / S2 / LL).